A 107-amino-acid chain; its full sequence is DNA-directed RNA polymerase subunit omega (107 aa).

The protein belongs to the RNA polymerase subunit omega family. As to quaternary structure, the RNAP catalytic core consists of 2 alpha, 1 beta, 1 beta' and 1 omega subunit. When a sigma factor is associated with the core the holoenzyme is formed, which can initiate transcription.

The catalysed reaction is RNA(n) + a ribonucleoside 5'-triphosphate = RNA(n+1) + diphosphate. Its function is as follows. Promotes RNA polymerase assembly. Latches the N- and C-terminal regions of the beta' subunit thereby facilitating its interaction with the beta and alpha subunits. This is DNA-directed RNA polymerase subunit omega from Mycolicibacterium smegmatis (strain ATCC 700084 / mc(2)155) (Mycobacterium smegmatis).